A 90-amino-acid polypeptide reads, in one-letter code: Large ribosomal subunit protein eL31 (90 aa).

The protein belongs to the eukaryotic ribosomal protein eL31 family.

The polypeptide is Large ribosomal subunit protein eL31 (Natronomonas pharaonis (strain ATCC 35678 / DSM 2160 / CIP 103997 / JCM 8858 / NBRC 14720 / NCIMB 2260 / Gabara) (Halobacterium pharaonis)).